The following is a 117-amino-acid chain: Large ribosomal subunit protein uL18 (117 aa).

This sequence belongs to the universal ribosomal protein uL18 family. Part of the 50S ribosomal subunit; part of the 5S rRNA/L5/L18/L25 subcomplex. Contacts the 5S and 23S rRNAs.

This is one of the proteins that bind and probably mediate the attachment of the 5S RNA into the large ribosomal subunit, where it forms part of the central protuberance. The polypeptide is Large ribosomal subunit protein uL18 (Tolumonas auensis (strain DSM 9187 / NBRC 110442 / TA 4)).